A 99-amino-acid polypeptide reads, in one-letter code: Large ribosomal subunit protein bL27 (99 aa).

The segment at Met-1–Leu-21 is disordered.

Belongs to the bacterial ribosomal protein bL27 family.

This chain is Large ribosomal subunit protein bL27, found in Thermomicrobium roseum (strain ATCC 27502 / DSM 5159 / P-2).